The following is a 494-amino-acid chain: Bifunctional protein HldE (494 aa).

Positions 1–334 are ribokinase; it reads MPTPILDFDA…RKILPHAYLA (334 aa). 209–212 serves as a coordination point for ATP; the sequence is NRKE. Aspartate 279 is an active-site residue. Positions 362 to 494 are cytidylyltransferase; that stretch reads FTNGCFDILH…LVHRARGGAK (133 aa).

In the N-terminal section; belongs to the carbohydrate kinase PfkB family. This sequence in the C-terminal section; belongs to the cytidylyltransferase family. Homodimer.

The enzyme catalyses D-glycero-beta-D-manno-heptose 7-phosphate + ATP = D-glycero-beta-D-manno-heptose 1,7-bisphosphate + ADP + H(+). The catalysed reaction is D-glycero-beta-D-manno-heptose 1-phosphate + ATP + H(+) = ADP-D-glycero-beta-D-manno-heptose + diphosphate. Its pathway is nucleotide-sugar biosynthesis; ADP-L-glycero-beta-D-manno-heptose biosynthesis; ADP-L-glycero-beta-D-manno-heptose from D-glycero-beta-D-manno-heptose 7-phosphate: step 1/4. It functions in the pathway nucleotide-sugar biosynthesis; ADP-L-glycero-beta-D-manno-heptose biosynthesis; ADP-L-glycero-beta-D-manno-heptose from D-glycero-beta-D-manno-heptose 7-phosphate: step 3/4. In terms of biological role, catalyzes the phosphorylation of D-glycero-D-manno-heptose 7-phosphate at the C-1 position to selectively form D-glycero-beta-D-manno-heptose-1,7-bisphosphate. Catalyzes the ADP transfer from ATP to D-glycero-beta-D-manno-heptose 1-phosphate, yielding ADP-D-glycero-beta-D-manno-heptose. The sequence is that of Bifunctional protein HldE from Bradyrhizobium diazoefficiens (strain JCM 10833 / BCRC 13528 / IAM 13628 / NBRC 14792 / USDA 110).